The chain runs to 429 residues: MDRIKIVGGNKLNGVIPISGAKNAALPLMIASLLTDDTLTLENVPHLADVEQLIRILSNHGVDYSVNGRREHQNGPYSRTIHFTARNIVDTTAPYELVSRMRASFWVIGPLLARMGEANVSLPGGCAIGTRPVDLLLDALLALGAEIDIENGYAKAKARNGLVGARYKFPKVSVGATHVMLMAATLAKGETIIENAAREPEVANLADCLNAMGAKISGAGSSTIHVQGVTNLSGARVRIIPDRIEAGTYAMAVAMTGGDVLLEGAQESQLSCVLETLRQAGAEINETNSGLRVVRNGHGIQPVDITTDPFPGFPTDLQAQFMGLMTRAKGTSHITETIFENRFMHVQELARLGAKISLSGQTATVEGVERLKGAQVMATDLRASVSLVIAGLAAEGETIVNRVYHLDRGFERLEEKLSRCGADVKRISG.

Lys-22–Asn-23 is a phosphoenolpyruvate binding site. Arg-102 serves as a coordination point for UDP-N-acetyl-alpha-D-glucosamine. The Proton donor role is filled by Cys-126. Cys-126 is subject to 2-(S-cysteinyl)pyruvic acid O-phosphothioketal. UDP-N-acetyl-alpha-D-glucosamine-binding positions include Arg-131–Leu-135, Lys-171–Val-174, Asp-316, and Ile-338.

It belongs to the EPSP synthase family. MurA subfamily.

The protein localises to the cytoplasm. The catalysed reaction is phosphoenolpyruvate + UDP-N-acetyl-alpha-D-glucosamine = UDP-N-acetyl-3-O-(1-carboxyvinyl)-alpha-D-glucosamine + phosphate. It functions in the pathway cell wall biogenesis; peptidoglycan biosynthesis. In terms of biological role, cell wall formation. Adds enolpyruvyl to UDP-N-acetylglucosamine. The chain is UDP-N-acetylglucosamine 1-carboxyvinyltransferase from Brucella abortus (strain S19).